The chain runs to 93 residues: Small ribosomal subunit protein uS19c (93 aa).

Belongs to the universal ribosomal protein uS19 family.

The protein localises to the plastid. It localises to the chloroplast. In terms of biological role, protein S19 forms a complex with S13 that binds strongly to the 16S ribosomal RNA. The sequence is that of Small ribosomal subunit protein uS19c from Tetradesmus obliquus (Green alga).